The following is a 730-amino-acid chain: Nitrogen regulatory protein GLN3 (730 aa).

A disordered region spans residues 1-45; it reads MQDDPENSKLYDLLNSHLDVHGRSNEEPRQTGDSRSQSSGNTGEN. Residues 18–32 are compositionally biased toward basic and acidic residues; sequence LDVHGRSNEEPRQTG. The span at 33–43 shows a compositional bias: polar residues; that stretch reads DSRSQSSGNTG. Positions 129–137 match the 9aaTAD motif; that stretch reads GEIAQLWDF. Disordered regions lie at residues 187–208 and 224–262; these read SSTS…TNAQ and SSSA…TTNS. Low complexity predominate over residues 224 to 240; it reads SSSAMNITNNNNSNNSN. The residue at position 251 (S251) is a Phosphoserine. Positions 252 to 262 are enriched in polar residues; that stretch reads IGLSSSNTTNS. Phosphoserine is present on residues S267 and S285. A GATA-type zinc finger spans residues 306-330; that stretch reads CFNCKTFKTPLWRRSPEGNTLCNAC. Disordered regions lie at residues 355-398 and 449-516; these read SKKR…SLQQ and ANFN…NSQQ. Composition is skewed to low complexity over residues 370 to 384, 449 to 470, and 482 to 499; these read TPSA…VTTT, ANFN…HNSN, and RSST…SSRS. S469 carries the phosphoserine modification. 2 positions are modified to phosphoserine: S552 and S562. 2 disordered regions span residues 593-673 and 696-717; these read LHEQ…SNSF and DVSA…KESS. Composition is skewed to low complexity over residues 596–631, 641–651, and 658–672; these read QQQV…NFVS, TPVDSPSVSRP, and TSLL…ESNS.

The protein localises to the nucleus. Its function is as follows. Positive nitrogen regulatory protein. Required for the activation of transcription of a number of genes (including the allantoin pathway genes) in response to the replacement of glutamine by glutamate as source of nitrogen. Binds the nitrogen upstream activation sequence of GLN1, the gene encoding glutamine synthetase. URE2 may catalytically inactivate GLN3 in response to an increase in the intracellular concentration of glutamine. This is Nitrogen regulatory protein GLN3 (GLN3) from Saccharomyces cerevisiae (strain ATCC 204508 / S288c) (Baker's yeast).